A 423-amino-acid polypeptide reads, in one-letter code: Flotillin-1 (423 aa).

This sequence belongs to the band 7/mec-2 family. Flotillin subfamily. Heterooligomeric complex of flotillin-1 and flotillin-2 and caveolin-1 and caveolin-2. As to expression, normally expressed in growing retinal exons of newly differentiated ganglion cells at the retinal margin. After optic nerve injury, expressed in all retinal ganglion cells and retinal axons. Also expressed in endothelial cells, spinal cord, larval and adult skin, muscle processes, thymus and gill macrophages.

It is found in the cell membrane. The protein localises to the endosome. The protein resides in the membrane. It localises to the caveola. Its subcellular location is the melanosome. It is found in the membrane raft. Functionally, may act as a scaffolding protein within caveolar membranes, functionally participating in formation of caveolae or caveolae-like vesicles. This is Flotillin-1 (flot1) from Carassius auratus (Goldfish).